The primary structure comprises 710 residues: Prolyl endopeptidase (710 aa).

M1 bears the N-acetylmethionine mark. K157 is modified (N6-acetyllysine). Active-site charge relay system residues include S554, D641, and H680.

It belongs to the peptidase S9A family. Monomer. In terms of processing, the N-terminus is blocked.

The protein resides in the cytoplasm. It carries out the reaction Hydrolysis of Pro-|-Xaa &gt;&gt; Ala-|-Xaa in oligopeptides.. Functionally, cleaves peptide bonds on the C-terminal side of prolyl residues within peptides that are up to approximately 30 amino acids long. The protein is Prolyl endopeptidase (PREP) of Homo sapiens (Human).